The primary structure comprises 76 residues: Exodeoxyribonuclease 7 small subunit (76 aa).

Belongs to the XseB family. In terms of assembly, heterooligomer composed of large and small subunits.

Its subcellular location is the cytoplasm. It carries out the reaction Exonucleolytic cleavage in either 5'- to 3'- or 3'- to 5'-direction to yield nucleoside 5'-phosphates.. In terms of biological role, bidirectionally degrades single-stranded DNA into large acid-insoluble oligonucleotides, which are then degraded further into small acid-soluble oligonucleotides. This Legionella pneumophila subsp. pneumophila (strain Philadelphia 1 / ATCC 33152 / DSM 7513) protein is Exodeoxyribonuclease 7 small subunit.